Consider the following 395-residue polypeptide: S-adenosylmethionine synthase (395 aa).

ATP is bound at residue His-16. Position 18 (Asp-18) interacts with Mg(2+). Residue Glu-44 participates in K(+) binding. Residues Glu-57 and Gln-100 each coordinate L-methionine. The segment at 100 to 110 is flexible loop; the sequence is QSPDIAQGVDR. ATP is bound by residues 167–169, 233–234, Asp-242, 248–249, Ala-265, and Lys-269; these read DAK, RF, and RK. Asp-242 lines the L-methionine pocket. L-methionine is bound at residue Lys-273.

This sequence belongs to the AdoMet synthase family. As to quaternary structure, homotetramer; dimer of dimers. Requires Mg(2+) as cofactor. The cofactor is K(+).

It localises to the cytoplasm. It carries out the reaction L-methionine + ATP + H2O = S-adenosyl-L-methionine + phosphate + diphosphate. Its pathway is amino-acid biosynthesis; S-adenosyl-L-methionine biosynthesis; S-adenosyl-L-methionine from L-methionine: step 1/1. Its function is as follows. Catalyzes the formation of S-adenosylmethionine (AdoMet) from methionine and ATP. The overall synthetic reaction is composed of two sequential steps, AdoMet formation and the subsequent tripolyphosphate hydrolysis which occurs prior to release of AdoMet from the enzyme. In Burkholderia cenocepacia (strain HI2424), this protein is S-adenosylmethionine synthase.